Here is a 476-residue protein sequence, read N- to C-terminus: Trigger factor (476 aa).

The region spanning 174 to 261 is the PPIase FKBP-type domain; that stretch reads GDIAVVSFKG…LKDLKEKELP (88 aa). Positions 436–476 are disordered; sequence KENTTKTSKTTKNSKTTKATKTTKTTKTTKTSKTQNKKEKK. The span at 440 to 469 shows a compositional bias: low complexity; sequence TKTSKTTKNSKTTKATKTTKTTKTTKTSKT.

Belongs to the FKBP-type PPIase family. Tig subfamily.

It localises to the cytoplasm. The catalysed reaction is [protein]-peptidylproline (omega=180) = [protein]-peptidylproline (omega=0). Involved in protein export. Acts as a chaperone by maintaining the newly synthesized protein in an open conformation. Functions as a peptidyl-prolyl cis-trans isomerase. This is Trigger factor from Prochlorococcus marinus (strain MIT 9215).